A 215-amino-acid chain; its full sequence is Cytochrome b6 (215 aa).

The chain crosses the membrane as a helical span at residues 32 to 52; the sequence is IFYCLGGITFTLFLVQVATGF. Cys-35 provides a ligand contact to heme c. Residues His-86 and His-100 each coordinate heme b. The next 3 helical transmembrane spans lie at 90-110, 116-136, and 186-206; these read ASMMVLSMILHVCRVYLTGGF, LTWITGVIMAVCTVSFGVTGY, and LHTFVLPLLTVVFMLAHFLMI. Heme b is bound by residues His-187 and His-202.

It belongs to the cytochrome b family. PetB subfamily. The 4 large subunits of the cytochrome b6-f complex are cytochrome b6, subunit IV (17 kDa polypeptide, PetD), cytochrome f and the Rieske protein, while the 4 small subunits are PetG, PetL, PetM and PetN. The complex functions as a dimer. It depends on heme b as a cofactor. The cofactor is heme c.

The protein resides in the plastid. Its subcellular location is the chloroplast thylakoid membrane. Component of the cytochrome b6-f complex, which mediates electron transfer between photosystem II (PSII) and photosystem I (PSI), cyclic electron flow around PSI, and state transitions. The chain is Cytochrome b6 from Tupiella akineta (Green alga).